Here is a 394-residue protein sequence, read N- to C-terminus: Cell division protein FtsZ (394 aa).

Residues 21-25 (GGGGN), 108-110 (GTG), Glu139, Arg143, and Asp187 each bind GTP.

It belongs to the FtsZ family. In terms of assembly, homodimer. Polymerizes to form a dynamic ring structure in a strictly GTP-dependent manner. Interacts directly with several other division proteins. Interacts with the SulA inhibitor.

The protein resides in the cytoplasm. In terms of biological role, essential cell division protein that forms a contractile ring structure (Z ring) at the future cell division site. The regulation of the ring assembly controls the timing and the location of cell division. One of the functions of the FtsZ ring is to recruit other cell division proteins to the septum to produce a new cell wall between the dividing cells. Binds GTP and shows GTPase activity. The protein is Cell division protein FtsZ of Pseudomonas aeruginosa (strain ATCC 15692 / DSM 22644 / CIP 104116 / JCM 14847 / LMG 12228 / 1C / PRS 101 / PAO1).